Here is a 114-residue protein sequence, read N- to C-terminus: Probable divalent-cation tolerance protein cutA homolog (114 aa).

The protein belongs to the CutA family. In terms of assembly, homotrimer.

This chain is Probable divalent-cation tolerance protein cutA homolog, found in Encephalitozoon cuniculi (strain GB-M1) (Microsporidian parasite).